We begin with the raw amino-acid sequence, 258 residues long: Indole-3-glycerol phosphate synthase (258 aa).

It belongs to the TrpC family.

It carries out the reaction 1-(2-carboxyphenylamino)-1-deoxy-D-ribulose 5-phosphate + H(+) = (1S,2R)-1-C-(indol-3-yl)glycerol 3-phosphate + CO2 + H2O. The protein operates within amino-acid biosynthesis; L-tryptophan biosynthesis; L-tryptophan from chorismate: step 4/5. This Geobacillus kaustophilus (strain HTA426) protein is Indole-3-glycerol phosphate synthase.